A 270-amino-acid chain; its full sequence is Putative phosphoenolpyruvate synthase regulatory protein (270 aa).

150 to 157 (GVSRCGKT) lines the ADP pocket.

Belongs to the pyruvate, phosphate/water dikinase regulatory protein family. PSRP subfamily.

It catalyses the reaction [pyruvate, water dikinase] + ADP = [pyruvate, water dikinase]-phosphate + AMP + H(+). It carries out the reaction [pyruvate, water dikinase]-phosphate + phosphate + H(+) = [pyruvate, water dikinase] + diphosphate. Functionally, bifunctional serine/threonine kinase and phosphorylase involved in the regulation of the phosphoenolpyruvate synthase (PEPS) by catalyzing its phosphorylation/dephosphorylation. This is Putative phosphoenolpyruvate synthase regulatory protein from Shewanella oneidensis (strain ATCC 700550 / JCM 31522 / CIP 106686 / LMG 19005 / NCIMB 14063 / MR-1).